We begin with the raw amino-acid sequence, 852 residues long: Homeobox-leucine zipper protein ATHB-14 (852 aa).

The segment at 1–25 is disordered; sequence MMMVHSMSRDMMNRESPDKGLDSGK. Positions 7 to 22 are enriched in basic and acidic residues; the sequence is MSRDMMNRESPDKGLD. Positions 22–85 form a DNA-binding region, homeobox; sequence DSGKYVRYTP…NRRCREKQRK (64 aa). A coiled-coil region spans residues 80–122; that stretch reads REKQRKEAARLQTVNRKLNAMNKLLMEENDRLQKQVSNLVYEN. The interval 80–130 is ZIP domain; sequence REKQRKEAARLQTVNRKLNAMNKLLMEENDRLQKQVSNLVYENGHMKHQLH. Positions 130–148 are enriched in polar residues; that stretch reads HTASGTTTDNSCESVVVSG. Positions 130–166 are disordered; the sequence is HTASGTTTDNSCESVVVSGQQHQQQNPNPQHQQRDAN. Residues 149 to 160 are compositionally biased toward low complexity; sequence QQHQQQNPNPQH. Residues 164–392 form the START domain; it reads DANNPAGLLS…IAQETSGEVQ (229 aa).

The protein belongs to the HD-ZIP homeobox family. Class III subfamily. In terms of assembly, homodimer. Heterodimer with ZPR3. Interacts with ESR1 and ESR2. Interacts with ZPR3. As to expression, expressed in the center of the meristem and on the adaxial side of the leaves.

It is found in the nucleus. Its activity is regulated as follows. Inhibited by ZPR3. Probable transcription factor involved in the determination of adaxial-abaxial polarity in ovule primordium. Specifies adaxial leaf fates. The sequence is that of Homeobox-leucine zipper protein ATHB-14 (ATHB-14) from Arabidopsis thaliana (Mouse-ear cress).